Here is a 728-residue protein sequence, read N- to C-terminus: Glycine--tRNA ligase (728 aa).

A mitochondrion-targeting transit peptide spans 1 to 32 (MPCLLPTLLRATRAALLLQSPRVVAAPASQRL). Residues 52–108 (LLAPLRLAVRQQGDFVRKLKEDKAPQVDVDRAVAELKARKRVLEAKELALQPKDDIV) form the WHEP-TRS domain. At Lys193 the chain carries N6-acetyllysine. Glu288 lines the glycine pocket. Residues 320–322 (RNE) and 331–332 (RV) contribute to the ATP site. Glu339 is a binding site for glycine. Tyr442 bears the Phosphotyrosine mark. 446 to 447 (EI) contributes to the ATP binding site. Lys490 is subject to N6-acetyllysine. Position 565-567 (565-567 (EPS)) interacts with glycine. ATP is bound at residue Arg572. Ser689 is subject to Phosphoserine. Phosphothreonine is present on Thr725.

Belongs to the class-II aminoacyl-tRNA synthetase family. Homodimer.

The protein localises to the cytoplasm. It is found in the mitochondrion. It localises to the cell projection. Its subcellular location is the axon. The protein resides in the secreted. The protein localises to the extracellular exosome. It carries out the reaction tRNA(Gly) + glycine + ATP = glycyl-tRNA(Gly) + AMP + diphosphate. The catalysed reaction is 2 ATP + H(+) = P(1),P(4)-bis(5'-adenosyl) tetraphosphate + diphosphate. Its function is as follows. Catalyzes the ATP-dependent ligation of glycine to the 3'-end of its cognate tRNA, via the formation of an aminoacyl-adenylate intermediate (Gly-AMP). Also produces diadenosine tetraphosphate (Ap4A), a universal pleiotropic signaling molecule needed for cell regulation pathways, by direct condensation of 2 ATPs. Thereby, may play a special role in Ap4A homeostasis. This chain is Glycine--tRNA ligase (Gars1), found in Rattus norvegicus (Rat).